The primary structure comprises 699 residues: tRNA wybutosine-synthesizing protein 4 (699 aa).

Residues Arg-94, Gly-120, Asp-151, Asp-197–Leu-198, and Glu-224 contribute to the S-adenosyl-L-methionine site.

It belongs to the methyltransferase superfamily. LCMT family.

It carries out the reaction 7-[(3S)-3-amino-3-carboxypropyl]wyosine(37) in tRNA(Phe) + S-adenosyl-L-methionine = 7-[(3S)-(3-amino-3-methoxycarbonyl)propyl]wyosine(37) in tRNA(Phe) + S-adenosyl-L-homocysteine. It catalyses the reaction 7-[(3S)-(3-amino-3-methoxycarbonyl)propyl]wyosine(37) in tRNA(Phe) + S-adenosyl-L-methionine + CO2 = wybutosine(37) in tRNA(Phe) + S-adenosyl-L-homocysteine + 2 H(+). The protein operates within tRNA modification; wybutosine-tRNA(Phe) biosynthesis. Probable S-adenosyl-L-methionine-dependent methyltransferase that acts as a component of the wybutosine biosynthesis pathway. Wybutosine is a hyper modified guanosine with a tricyclic base found at the 3'-position adjacent to the anticodon of eukaryotic phenylalanine tRNA. May methylate the carboxyl group of leucine residues to form alpha-leucine ester residues. The protein is tRNA wybutosine-synthesizing protein 4 (PPM2) of Eremothecium gossypii (strain ATCC 10895 / CBS 109.51 / FGSC 9923 / NRRL Y-1056) (Yeast).